The following is a 223-amino-acid chain: Small ribosomal subunit protein uS3 (223 aa).

The KH type-2 domain occupies 39-115 (IRKYIEKNLA…RVFINIVEIK (77 aa)).

Belongs to the universal ribosomal protein uS3 family. As to quaternary structure, part of the 30S ribosomal subunit. Forms a tight complex with proteins S10 and S14.

Functionally, binds the lower part of the 30S subunit head. Binds mRNA in the 70S ribosome, positioning it for translation. This is Small ribosomal subunit protein uS3 from Leuconostoc citreum (strain KM20).